A 79-amino-acid chain; its full sequence is Small ribosomal subunit protein bS16 (79 aa).

Belongs to the bacterial ribosomal protein bS16 family.

This Solidesulfovibrio magneticus (strain ATCC 700980 / DSM 13731 / RS-1) (Desulfovibrio magneticus) protein is Small ribosomal subunit protein bS16.